A 523-amino-acid chain; its full sequence is Acetyl-CoA hydrolase (523 aa).

Position 277-281 (277-281 (GIGNI)) interacts with CoA. The 5-glutamyl coenzyme A thioester intermediate role is filled by glutamate 302. Residues asparagine 392 and glycine 396 each contribute to the CoA site.

This sequence belongs to the acetyl-CoA hydrolase/transferase family.

The protein localises to the cytoplasm. It carries out the reaction acetyl-CoA + H2O = acetate + CoA + H(+). Presumably involved in regulating the intracellular acetyl-CoA pool for fatty acid and cholesterol synthesis and fatty acid oxidation. This chain is Acetyl-CoA hydrolase (ACH1), found in Eremothecium gossypii (strain ATCC 10895 / CBS 109.51 / FGSC 9923 / NRRL Y-1056) (Yeast).